A 343-amino-acid chain; its full sequence is Ribosomal RNA small subunit methyltransferase C (343 aa).

The protein belongs to the methyltransferase superfamily. RsmC family. Monomer.

Its subcellular location is the cytoplasm. It carries out the reaction guanosine(1207) in 16S rRNA + S-adenosyl-L-methionine = N(2)-methylguanosine(1207) in 16S rRNA + S-adenosyl-L-homocysteine + H(+). Functionally, specifically methylates the guanine in position 1207 of 16S rRNA in the 30S particle. This Shigella flexneri protein is Ribosomal RNA small subunit methyltransferase C.